A 74-amino-acid chain; its full sequence is Translational regulator CsrA (74 aa).

This sequence belongs to the CsrA/RsmA family. As to quaternary structure, homodimer; the beta-strands of each monomer intercalate to form a hydrophobic core, while the alpha-helices form wings that extend away from the core.

The protein resides in the cytoplasm. A translational regulator that binds mRNA to regulate translation initiation and/or mRNA stability. Usually binds in the 5'-UTR at or near the Shine-Dalgarno sequence preventing ribosome-binding, thus repressing translation. Its main target seems to be the major flagellin gene, while its function is anatagonized by FliW. This chain is Translational regulator CsrA, found in Bacillus velezensis (strain DSM 23117 / BGSC 10A6 / LMG 26770 / FZB42) (Bacillus amyloliquefaciens subsp. plantarum).